The following is a 147-amino-acid chain: MRTYSPKPGDIQREWLVIDATDVVLGRLAVQTANLLRGKHKAIFAPHVDTGDFVIIVNAEKVALSGDKATTKMAYRHSGYPGGLTATPIGEILEKDARKAIEKAVWGMLPKNKLGRQMLKKLKVYSGPNHPHQAQKATPFEIKQISQ.

This sequence belongs to the universal ribosomal protein uL13 family. Part of the 50S ribosomal subunit.

This protein is one of the early assembly proteins of the 50S ribosomal subunit, although it is not seen to bind rRNA by itself. It is important during the early stages of 50S assembly. The protein is Large ribosomal subunit protein uL13 of Nocardioides sp. (strain ATCC BAA-499 / JS614).